The chain runs to 265 residues: Exosome complex component RRP42 (265 aa).

The protein belongs to the RNase PH family. As to quaternary structure, component of the RNA exosome complex. Specifically part of the catalytically inactive RNA exosome core complex (Exo-9) which may associate with the catalytic subunits RRP6 and DIS3 in cytoplasmic- and nuclear-specific RNA exosome complex forms. Exo-9 is formed by a hexameric base ring of RNase PH domain-containing subunits and a cap ring consisting of CSL4, RRP4 and RRP40.

The protein resides in the cytoplasm. The protein localises to the nucleus. It localises to the nucleolus. Functionally, non-catalytic component of the RNA exosome complex which has 3'-&gt;5' exoribonuclease activity and participates in a multitude of cellular RNA processing and degradation events. In the nucleus, the RNA exosome complex is involved in proper maturation of stable RNA species such as rRNA, snRNA and snoRNA, in the elimination of RNA processing by-products and non-coding 'pervasive' transcripts, such as antisense RNA species and cryptic unstable transcripts (CUTs), and of mRNAs with processing defects, thereby limiting or excluding their export to the cytoplasm. In the cytoplasm, the RNA exosome complex is involved in general mRNA turnover and in RNA surveillance pathways, preventing translation of aberrant mRNAs. The catalytic inactive RNA exosome core complex of 9 subunits (Exo-9) is proposed to play a pivotal role in the binding and presentation of RNA for ribonucleolysis, and to serve as a scaffold for the association with catalytic subunits and accessory proteins or complexes. RRP42 is part of the hexameric ring of RNase PH domain-containing subunits proposed to form a central channel which threads RNA substrates for degradation. The chain is Exosome complex component RRP42 (RRP42) from Saccharomyces cerevisiae (strain ATCC 204508 / S288c) (Baker's yeast).